Here is a 297-residue protein sequence, read N- to C-terminus: Pyridoxal 5'-phosphate synthase subunit Pdx1 (297 aa).

D27 contacts D-ribose 5-phosphate. Residue K84 is the Schiff-base intermediate with D-ribose 5-phosphate of the active site. G156 contributes to the D-ribose 5-phosphate binding site. Residue R168 coordinates D-glyceraldehyde 3-phosphate. D-ribose 5-phosphate-binding positions include G217 and 238 to 239; that span reads GS.

It belongs to the PdxS/SNZ family. Homohexamer and homododecamer. In the presence of Pdx2, forms a dodecamer of heterodimers.

The enzyme catalyses aldehydo-D-ribose 5-phosphate + D-glyceraldehyde 3-phosphate + L-glutamine = pyridoxal 5'-phosphate + L-glutamate + phosphate + 3 H2O + H(+). It functions in the pathway cofactor biosynthesis; pyridoxal 5'-phosphate biosynthesis. In terms of biological role, catalyzes the formation of pyridoxal 5'-phosphate from ribose 5-phosphate (RBP), glyceraldehyde 3-phosphate (G3P) and ammonia. The ammonia is provided by Pdx2. Can also use ribulose 5-phosphate and dihydroxyacetone phosphate as substrates, resulting from enzyme-catalyzed isomerization of RBP and G3P, respectively. This is Pyridoxal 5'-phosphate synthase subunit Pdx1 from Plasmodium berghei.